The following is a 277-amino-acid chain: Small ribosomal subunit protein uS2 (277 aa).

A disordered region spans residues 1-78; the sequence is MSENDEGTDA…PADEEPVLDE (78 aa).

It belongs to the universal ribosomal protein uS2 family.

The chain is Small ribosomal subunit protein uS2 from Natronomonas pharaonis (strain ATCC 35678 / DSM 2160 / CIP 103997 / JCM 8858 / NBRC 14720 / NCIMB 2260 / Gabara) (Halobacterium pharaonis).